Here is a 254-residue protein sequence, read N- to C-terminus: Leucyl/phenylalanyl-tRNA--protein transferase (254 aa).

The protein belongs to the L/F-transferase family.

Its subcellular location is the cytoplasm. It catalyses the reaction N-terminal L-lysyl-[protein] + L-leucyl-tRNA(Leu) = N-terminal L-leucyl-L-lysyl-[protein] + tRNA(Leu) + H(+). The enzyme catalyses N-terminal L-arginyl-[protein] + L-leucyl-tRNA(Leu) = N-terminal L-leucyl-L-arginyl-[protein] + tRNA(Leu) + H(+). The catalysed reaction is L-phenylalanyl-tRNA(Phe) + an N-terminal L-alpha-aminoacyl-[protein] = an N-terminal L-phenylalanyl-L-alpha-aminoacyl-[protein] + tRNA(Phe). Its function is as follows. Functions in the N-end rule pathway of protein degradation where it conjugates Leu, Phe and, less efficiently, Met from aminoacyl-tRNAs to the N-termini of proteins containing an N-terminal arginine or lysine. This Burkholderia cenocepacia (strain ATCC BAA-245 / DSM 16553 / LMG 16656 / NCTC 13227 / J2315 / CF5610) (Burkholderia cepacia (strain J2315)) protein is Leucyl/phenylalanyl-tRNA--protein transferase.